The chain runs to 295 residues: Glucose-1-phosphate thymidylyltransferase (295 aa).

Mg(2+) is bound by residues Asp111 and Asp226.

Belongs to the glucose-1-phosphate thymidylyltransferase family. In terms of assembly, homotetramer. Mg(2+) is required as a cofactor.

It catalyses the reaction dTTP + alpha-D-glucose 1-phosphate + H(+) = dTDP-alpha-D-glucose + diphosphate. The protein operates within carbohydrate biosynthesis; dTDP-L-rhamnose biosynthesis. Its pathway is bacterial outer membrane biogenesis; LPS O-antigen biosynthesis. Functionally, catalyzes the formation of dTDP-glucose, from dTTP and glucose 1-phosphate, as well as its pyrophosphorolysis. The sequence is that of Glucose-1-phosphate thymidylyltransferase (rmlA) from Xanthomonas campestris pv. campestris (strain B100).